Reading from the N-terminus, the 671-residue chain is Probable potassium transport system protein Kup (671 aa).

Residues 1 to 43 are disordered; it reads MSQIPSPNDPASTGAAPSSAAVPAGPSATPAPSPTAGFSLPGH. A compositionally biased stretch (low complexity) spans 10 to 37; that stretch reads PASTGAAPSSAAVPAGPSATPAPSPTAG. Transmembrane regions (helical) follow at residues 52–72, 92–112, 147–167, 181–201, 209–229, 255–275, 291–311, 323–343, 381–401, 407–427, 441–461, and 465–485; these read LAALAVGALGVVYGDIGTSPL, VLGVLSLVFWAMTFVVTFKYM, LMLGLFGAALLYGDGIITPAI, PAMERAVVPATVVILVFLFLF, VGAVFGPVMLVWFATIAVLGV, GWHGFLVLGGVVLVITGGEAL, WLGLAMPALLLNYLGQGALLL, LLAPEWALYPTIAIATAAAIV, IYLPEVNWMLGTACLALVLGF, LASAYGIAVTGTMIVTTLLFH, AWPLTSLFLTVDASFFLANVV, and DGGWFPIAAAALVFTLMSTWK.

The protein belongs to the HAK/KUP transporter (TC 2.A.72) family.

The protein resides in the cell inner membrane. It catalyses the reaction K(+)(in) + H(+)(in) = K(+)(out) + H(+)(out). Its function is as follows. Transport of potassium into the cell. Likely operates as a K(+):H(+) symporter. This is Probable potassium transport system protein Kup from Anaeromyxobacter sp. (strain K).